A 199-amino-acid chain; its full sequence is Probable nicotinate-nucleotide adenylyltransferase (199 aa).

The protein belongs to the NadD family.

The enzyme catalyses nicotinate beta-D-ribonucleotide + ATP + H(+) = deamido-NAD(+) + diphosphate. It functions in the pathway cofactor biosynthesis; NAD(+) biosynthesis; deamido-NAD(+) from nicotinate D-ribonucleotide: step 1/1. Catalyzes the reversible adenylation of nicotinate mononucleotide (NaMN) to nicotinic acid adenine dinucleotide (NaAD). The polypeptide is Probable nicotinate-nucleotide adenylyltransferase (Roseobacter denitrificans (strain ATCC 33942 / OCh 114) (Erythrobacter sp. (strain OCh 114))).